A 65-amino-acid chain; its full sequence is Large ribosomal subunit protein bL35 (65 aa).

2 stretches are compositionally biased toward basic residues: residues 1–11 (MPKIKTRRSAA) and 21–43 (KFKR…RKMR). The segment at 1–65 (MPKIKTRRSA…KAVRRMLPNG (65 aa)) is disordered.

The protein belongs to the bacterial ribosomal protein bL35 family.

The chain is Large ribosomal subunit protein bL35 from Desulfovibrio desulfuricans (strain ATCC 27774 / DSM 6949 / MB).